Reading from the N-terminus, the 438-residue chain is Tol-Pal system protein TolB (438 aa).

Positions 1-36 (MTPAFRRADLTGFLRTYGAALILLLAAMLAWQPAQA) are cleaved as a signal peptide.

This sequence belongs to the TolB family. The Tol-Pal system is composed of five core proteins: the inner membrane proteins TolA, TolQ and TolR, the periplasmic protein TolB and the outer membrane protein Pal. They form a network linking the inner and outer membranes and the peptidoglycan layer.

The protein localises to the periplasm. Part of the Tol-Pal system, which plays a role in outer membrane invagination during cell division and is important for maintaining outer membrane integrity. This is Tol-Pal system protein TolB from Bordetella pertussis (strain Tohama I / ATCC BAA-589 / NCTC 13251).